A 326-amino-acid polypeptide reads, in one-letter code: NADH-quinone oxidoreductase subunit H (326 aa).

A run of 8 helical transmembrane segments spans residues 11-31, 81-101, 114-134, 154-174, 186-206, 237-257, 265-285, and 302-322; these read ILLS…CGAF, VIFT…FAIV, IGIL…LFAG, LSYE…AGSF, LWNV…GVAV, FFVG…TLFF, LPPF…FILI, and WKVC…VILW.

This sequence belongs to the complex I subunit 1 family. As to quaternary structure, NDH-1 is composed of 13 different subunits. Subunits NuoA, H, J, K, L, M, N constitute the membrane sector of the complex.

It localises to the cell inner membrane. The catalysed reaction is a quinone + NADH + 5 H(+)(in) = a quinol + NAD(+) + 4 H(+)(out). In terms of biological role, NDH-1 shuttles electrons from NADH, via FMN and iron-sulfur (Fe-S) centers, to quinones in the respiratory chain. The immediate electron acceptor for the enzyme in this species is believed to be ubiquinone. Couples the redox reaction to proton translocation (for every two electrons transferred, four hydrogen ions are translocated across the cytoplasmic membrane), and thus conserves the redox energy in a proton gradient. This subunit may bind ubiquinone. The polypeptide is NADH-quinone oxidoreductase subunit H (Cronobacter sakazakii (strain ATCC BAA-894) (Enterobacter sakazakii)).